Here is a 386-residue protein sequence, read N- to C-terminus: Histidine decarboxylase (386 aa).

H120 provides a ligand contact to substrate. K233 is subject to N6-(pyridoxal phosphate)lysine.

It belongs to the group II decarboxylase family. In terms of assembly, homotetramer. The cofactor is pyridoxal 5'-phosphate.

It catalyses the reaction L-histidine + H(+) = histamine + CO2. It functions in the pathway siderophore biosynthesis; anguibactin biosynthesis. The protein is Histidine decarboxylase of Vibrio anguillarum (strain ATCC 68554 / 775) (Listonella anguillarum).